Reading from the N-terminus, the 275-residue chain is Coagulation factor IX (275 aa).

A Sulfotyrosine modification is found at Tyr23. Asn25 carries N-linked (GlcNAc...) asparagine glycosylation. Thr27 is modified (phosphothreonine). N-linked (GlcNAc...) asparagine glycosylation occurs at Asn35. O-linked (GalNAc...) threonine glycosylation is present at Thr47. The Peptidase S1 domain occupies 49 to 275 (IVGGENAKPG…YTRVSWYVNW (227 aa)). An intrachain disulfide couples Cys74 to Cys90. The Charge relay system role is filled by His89. Asn96 carries N-linked (GlcNAc...) asparagine glycosylation. The Ca(2+) site is built by Glu103, Asn105, Glu108, Glu110, and Glu113. The N-linked (GlcNAc...) asparagine glycan is linked to Asn128. Residue Asp137 is the Charge relay system of the active site. Disulfide bonds link Cys204/Cys218 and Cys229/Cys257. Ser233 acts as the Charge relay system in catalysis.

The protein belongs to the peptidase S1 family. As to quaternary structure, heterodimer of a light chain and a heavy chain; disulfide-linked. Interacts (inactive and activated) with F11 (activated) in calcium-dependent manner. Interacts with SERPINC1. In terms of processing, activated by factor XIa, which excises the activation peptide. The propeptide can also be removed by snake venom protease. Activated by coagulation factor VIIa-tissue factor (F7-F3) complex in calcium-dependent manner.

The protein resides in the secreted. The catalysed reaction is Selective cleavage of Arg-|-Ile bond in factor X to form factor Xa.. Its function is as follows. Factor IX is a vitamin K-dependent plasma protein that participates in the intrinsic pathway of blood coagulation by converting factor X to its active form in the presence of Ca(2+) ions, phospholipids, and factor VIIIa. In Oryctolagus cuniculus (Rabbit), this protein is Coagulation factor IX (F9).